A 181-amino-acid chain; its full sequence is NADH-quinone oxidoreductase subunit B 2 (181 aa).

Residues C44, C45, C110, and C139 each coordinate [4Fe-4S] cluster.

Belongs to the complex I 20 kDa subunit family. As to quaternary structure, NDH-1 is composed of 14 different subunits. Subunits NuoB, C, D, E, F, and G constitute the peripheral sector of the complex. The cofactor is [4Fe-4S] cluster.

It is found in the cell inner membrane. It carries out the reaction a quinone + NADH + 5 H(+)(in) = a quinol + NAD(+) + 4 H(+)(out). In terms of biological role, NDH-1 shuttles electrons from NADH, via FMN and iron-sulfur (Fe-S) centers, to quinones in the respiratory chain. The immediate electron acceptor for the enzyme in this species is believed to be a menaquinone. Couples the redox reaction to proton translocation (for every two electrons transferred, four hydrogen ions are translocated across the cytoplasmic membrane), and thus conserves the redox energy in a proton gradient. This chain is NADH-quinone oxidoreductase subunit B 2, found in Cytophaga hutchinsonii (strain ATCC 33406 / DSM 1761 / CIP 103989 / NBRC 15051 / NCIMB 9469 / D465).